Reading from the N-terminus, the 369-residue chain is Glutamate 5-kinase (369 aa).

Lysine 7 provides a ligand contact to ATP. The substrate site is built by serine 48, aspartate 135, and asparagine 147. ATP is bound by residues 167-168 and 208-214; these read TD and SGGMASK. The region spanning 275–353 is the PUA domain; that stretch reads AGALHLDEGA…HEIAALLGIE (79 aa).

The protein belongs to the glutamate 5-kinase family.

Its subcellular location is the cytoplasm. It catalyses the reaction L-glutamate + ATP = L-glutamyl 5-phosphate + ADP. It participates in amino-acid biosynthesis; L-proline biosynthesis; L-glutamate 5-semialdehyde from L-glutamate: step 1/2. Functionally, catalyzes the transfer of a phosphate group to glutamate to form L-glutamate 5-phosphate. This is Glutamate 5-kinase from Gloeobacter violaceus (strain ATCC 29082 / PCC 7421).